Reading from the N-terminus, the 493-residue chain is uncharacterized protein (493 aa).

The helical transmembrane segment at 10–30 threads the bilayer; the sequence is LVPSTRFALSLVMFFGCLVTY. N-linked (GlcNAc...) asparagine glycans are attached at residues asparagine 35, asparagine 47, and asparagine 69. The next 6 helical transmembrane spans lie at 85-105, 112-132, 144-164, 175-195, 205-225, and 272-292; these read MVLS…GHLA, RVVF…PVAA, AAIG…WSVW, GVTY…SGFL, PSIF…WWYV, and AVWA…TMLV. A glycan (N-linked (GlcNAc...) asparagine) is linked at asparagine 305. 4 helical membrane-spanning segments follow: residues 311 to 331, 348 to 368, 375 to 395, and 406 to 426; these read AVAS…GVLA, AAML…GYCG, VIIF…GFVV, and GTVM…SPAV. Residue asparagine 433 is glycosylated (N-linked (GlcNAc...) asparagine). The helical transmembrane segment at 441–461 threads the bilayer; the sequence is MVLWLTAGILTIGALLFSIFA.

This sequence belongs to the major facilitator superfamily. Sodium/anion cotransporter family.

Its subcellular location is the membrane. This is an uncharacterized protein from Caenorhabditis elegans.